Consider the following 506-residue polypeptide: ATP synthase subunit alpha, chloroplastic (506 aa).

170-177 (GDRQTGKT) lines the ATP pocket.

It belongs to the ATPase alpha/beta chains family. F-type ATPases have 2 components, CF(1) - the catalytic core - and CF(0) - the membrane proton channel. CF(1) has five subunits: alpha(3), beta(3), gamma(1), delta(1), epsilon(1). CF(0) has four main subunits: a, b, b' and c.

It is found in the plastid. The protein localises to the chloroplast thylakoid membrane. The catalysed reaction is ATP + H2O + 4 H(+)(in) = ADP + phosphate + 5 H(+)(out). In terms of biological role, produces ATP from ADP in the presence of a proton gradient across the membrane. The alpha chain is a regulatory subunit. The protein is ATP synthase subunit alpha, chloroplastic of Chlorella vulgaris (Green alga).